A 368-amino-acid chain; its full sequence is Caffeine synthase 3 (368 aa).

Tyr-23 lines the S-adenosyl-L-homocysteine pocket. Position 30 (Thr-30) interacts with caffeine. The S-adenosyl-L-homocysteine site is built by Cys-65, Asn-70, Asp-102, Leu-103, Ser-137, and Phe-138. Positions 155, 158, and 159 each coordinate caffeine. Residue Asn-176 coordinates Mg(2+). Position 224 (Arg-224) interacts with caffeine. Asp-262, Phe-264, and Asn-265 together coordinate Mg(2+). Phe-320 contributes to the caffeine binding site.

The protein belongs to the methyltransferase superfamily. Type-7 methyltransferase family. Requires Mg(2+) as cofactor.

It carries out the reaction theobromine + S-adenosyl-L-methionine = caffeine + S-adenosyl-L-homocysteine + H(+). The enzyme catalyses 7-methylxanthine + S-adenosyl-L-methionine = theobromine + S-adenosyl-L-homocysteine + H(+). The protein operates within alkaloid biosynthesis. Involved in the biosynthesis of caffeine. Catalyzes the conversion of 7-methylxanthine (7mX) to theobromine and of theobromine to caffeine. The protein is Caffeine synthase 3 of Camellia sinensis (Tea plant).